The sequence spans 226 residues: Putative type II restriction enzyme MjaVIP (226 aa).

Belongs to the BsaWI type II restriction endonuclease family.

The catalysed reaction is Endonucleolytic cleavage of DNA to give specific double-stranded fragments with terminal 5'-phosphates.. Its function is as follows. A P subtype restriction enzyme that recognizes the double-stranded sequence 5'-CCGG-3'; the cleavage site is unknown. This chain is Putative type II restriction enzyme MjaVIP (mjaVIRP), found in Methanocaldococcus jannaschii (strain ATCC 43067 / DSM 2661 / JAL-1 / JCM 10045 / NBRC 100440) (Methanococcus jannaschii).